The sequence spans 20 residues: Lysozyme (20 aa).

Monomer.

Its subcellular location is the secreted. The catalysed reaction is Hydrolysis of (1-&gt;4)-beta-linkages between N-acetylmuramic acid and N-acetyl-D-glucosamine residues in a peptidoglycan and between N-acetyl-D-glucosamine residues in chitodextrins.. Its function is as follows. Has bacteriolytic activity. This Lysobacter sp. (strain XL1) protein is Lysozyme.